The chain runs to 1041 residues: Serine-repeat antigen protein 6 (1041 aa).

The signal sequence occupies residues 1–34 (MIFFNFKLNRMICPIFFLYIINVLFTQYFIKCEG). A glycan (N-linked (GlcNAc...) asparagine) is linked at Asn-84. The span at 101 to 111 (KVVSSSESGKG) shows a compositional bias: low complexity. The disordered stretch occupies residues 101-173 (KVVSSSESGK…TESSSETLNK (73 aa)). A compositionally biased stretch (polar residues) spans 114 to 149 (VSHTKVTSEGLSDTQPNVTQSVSSSTHTPGSLDSTM). N-linked (GlcNAc...) asparagine glycosylation occurs at Asn-130. Positions 150–168 (STEQHSSVSQSSLPTESSS) are enriched in low complexity. Asn-459 is a glycosylation site (N-linked (GlcNAc...) asparagine). The tract at residues 500–577 (TLPSESPSES…GDTNYVYDFD (78 aa)) is disordered. Over residues 502-515 (PSESPSESSSKSDS) the composition is skewed to low complexity. The span at 521–545 (NDKDKNEDKDDMSKNSKEEFKNDDK) shows a compositional bias: basic and acidic residues. The N-linked (GlcNAc...) asparagine glycan is linked to Asn-554. The segment covering 564 to 574 (NINNGDTNYVY) has biased composition (low complexity). The N-linked (GlcNAc...) asparagine glycan is linked to Asn-583. Cys-654 is a catalytic residue. A glycan (N-linked (GlcNAc...) asparagine) is linked at Asn-684. Catalysis depends on residues His-820 and Asn-845. Asn-984 carries an N-linked (GlcNAc...) asparagine glycan.

Belongs to the peptidase C1 family. Just prior to merozoite egress from host erythrocytes, proteolytically cleaved by SUB1 to generate the active 75kDa form.

Its subcellular location is the parasitophorous vacuole lumen. The protein resides in the parasitophorous vacuole membrane. Cysteine protease which plays an essential role in merozoite egress from host erythrocytes. May cleave host SPTB/beta spectrin and ANK1/ankyrin-1 which disrupts host erythrocyte actin cytoskeleton and leads to host erythrocyte cell membrane rupture. This is Serine-repeat antigen protein 6 from Plasmodium falciparum.